The sequence spans 124 residues: Small ribosomal subunit protein uS12 (124 aa).

Aspartate 89 carries the 3-methylthioaspartic acid modification.

It belongs to the universal ribosomal protein uS12 family. Part of the 30S ribosomal subunit. Contacts proteins S8 and S17. May interact with IF1 in the 30S initiation complex.

With S4 and S5 plays an important role in translational accuracy. Its function is as follows. Interacts with and stabilizes bases of the 16S rRNA that are involved in tRNA selection in the A site and with the mRNA backbone. Located at the interface of the 30S and 50S subunits, it traverses the body of the 30S subunit contacting proteins on the other side and probably holding the rRNA structure together. The combined cluster of proteins S8, S12 and S17 appears to hold together the shoulder and platform of the 30S subunit. The chain is Small ribosomal subunit protein uS12 from Erwinia tasmaniensis (strain DSM 17950 / CFBP 7177 / CIP 109463 / NCPPB 4357 / Et1/99).